The primary structure comprises 97 residues: Putative membrane protein insertion efficiency factor (97 aa).

This sequence belongs to the UPF0161 family.

It is found in the cell membrane. Could be involved in insertion of integral membrane proteins into the membrane. The polypeptide is Putative membrane protein insertion efficiency factor (Lactobacillus helveticus (strain DPC 4571)).